The sequence spans 127 residues: Small ribosomal subunit protein uS11 (127 aa).

It belongs to the universal ribosomal protein uS11 family. Part of the 30S ribosomal subunit. Interacts with proteins S7 and S18. Binds to IF-3.

Functionally, located on the platform of the 30S subunit, it bridges several disparate RNA helices of the 16S rRNA. Forms part of the Shine-Dalgarno cleft in the 70S ribosome. The chain is Small ribosomal subunit protein uS11 from Chlorobium luteolum (strain DSM 273 / BCRC 81028 / 2530) (Pelodictyon luteolum).